Consider the following 294-residue polypeptide: Phosphoribosylaminoimidazole-succinocarboxamide synthase (294 aa).

This sequence belongs to the SAICAR synthetase family.

It catalyses the reaction 5-amino-1-(5-phospho-D-ribosyl)imidazole-4-carboxylate + L-aspartate + ATP = (2S)-2-[5-amino-1-(5-phospho-beta-D-ribosyl)imidazole-4-carboxamido]succinate + ADP + phosphate + 2 H(+). Its pathway is purine metabolism; IMP biosynthesis via de novo pathway; 5-amino-1-(5-phospho-D-ribosyl)imidazole-4-carboxamide from 5-amino-1-(5-phospho-D-ribosyl)imidazole-4-carboxylate: step 1/2. In Rhodococcus opacus (strain B4), this protein is Phosphoribosylaminoimidazole-succinocarboxamide synthase.